Reading from the N-terminus, the 670-residue chain is Meiotic sister-chromatid recombination protein 6, mitochondrial (670 aa).

A mitochondrion-targeting transit peptide spans Met-1–Ala-27.

Its subcellular location is the mitochondrion. May be involved in the control of meiotic sister-chromatid recombination. The sequence is that of Meiotic sister-chromatid recombination protein 6, mitochondrial (MSC6) from Eremothecium gossypii (strain ATCC 10895 / CBS 109.51 / FGSC 9923 / NRRL Y-1056) (Yeast).